Consider the following 170-residue polypeptide: ATP synthase subunit b (170 aa).

A helical transmembrane segment spans residues 11-31 (GLNTGDIIFQLIAMLILLALL).

Belongs to the ATPase B chain family. F-type ATPases have 2 components, F(1) - the catalytic core - and F(0) - the membrane proton channel. F(1) has five subunits: alpha(3), beta(3), gamma(1), delta(1), epsilon(1). F(0) has three main subunits: a(1), b(2) and c(10-14). The alpha and beta chains form an alternating ring which encloses part of the gamma chain. F(1) is attached to F(0) by a central stalk formed by the gamma and epsilon chains, while a peripheral stalk is formed by the delta and b chains.

The protein localises to the cell membrane. F(1)F(0) ATP synthase produces ATP from ADP in the presence of a proton or sodium gradient. F-type ATPases consist of two structural domains, F(1) containing the extramembraneous catalytic core and F(0) containing the membrane proton channel, linked together by a central stalk and a peripheral stalk. During catalysis, ATP synthesis in the catalytic domain of F(1) is coupled via a rotary mechanism of the central stalk subunits to proton translocation. Its function is as follows. Component of the F(0) channel, it forms part of the peripheral stalk, linking F(1) to F(0). This chain is ATP synthase subunit b, found in Bacillus pumilus (strain SAFR-032).